We begin with the raw amino-acid sequence, 209 residues long: Ribosomal RNA large subunit methyltransferase E (209 aa).

5 residues coordinate S-adenosyl-L-methionine: Gly-63, Trp-65, Asp-83, Asp-99, and Asp-124. The active-site Proton acceptor is Lys-164.

Belongs to the class I-like SAM-binding methyltransferase superfamily. RNA methyltransferase RlmE family.

It is found in the cytoplasm. The enzyme catalyses uridine(2552) in 23S rRNA + S-adenosyl-L-methionine = 2'-O-methyluridine(2552) in 23S rRNA + S-adenosyl-L-homocysteine + H(+). Its function is as follows. Specifically methylates the uridine in position 2552 of 23S rRNA at the 2'-O position of the ribose in the fully assembled 50S ribosomal subunit. The protein is Ribosomal RNA large subunit methyltransferase E of Klebsiella pneumoniae (strain 342).